The following is a 351-amino-acid chain: Large ribosomal subunit protein uL3 (351 aa).

2 disordered regions span residues 1 to 31 and 246 to 271; these read MGHR…TPRT and KGSR…GQLG.

Belongs to the universal ribosomal protein uL3 family. Part of the 50S ribosomal subunit. Forms a cluster with proteins L14 and L24e.

One of the primary rRNA binding proteins, it binds directly near the 3'-end of the 23S rRNA, where it nucleates assembly of the 50S subunit. In Saccharolobus solfataricus (strain ATCC 35092 / DSM 1617 / JCM 11322 / P2) (Sulfolobus solfataricus), this protein is Large ribosomal subunit protein uL3.